We begin with the raw amino-acid sequence, 1746 residues long: tRNA (32-2'-O)-methyltransferase regulator THADA (1746 aa).

Positions 1252–1286 (EQALAEIRRIVVELKALQLRLKNTEAANTKLNTNV) form a coiled coil.

This sequence belongs to the THADA family. Interacts with SERCA. Detected in the larval fat body, salivary glands and wing imaginal disks (at protein level).

The protein localises to the endoplasmic reticulum. In terms of biological role, together with methyltransferase Trm7-32, methylates the 2'-O-ribose of nucleotides at position 32 of the anticodon loop of substrate tRNAs. Plays a key role in energy homeostasis by regulating the balance between energy storage and heat production. Functions by negatively regulating Ca(2+) signaling pathways that are involved in heat production and maintaining correct lipid storage in the fat body. Regulates Ca(2+) signaling pathways by reducing the activity of the calcium-transporting ATPase SERCA possibly by promoting uncoupling of SERCA ATP hydrolysis from calcium pumping. May also function in the nervous system to control feeding behavior. In Drosophila melanogaster (Fruit fly), this protein is tRNA (32-2'-O)-methyltransferase regulator THADA.